The sequence spans 146 residues: Hemoglobin subunit beta (146 aa).

The Globin domain maps to 2 to 146 (PFSAHEEKLI…VAAALSVEYY (145 aa)). Heme b is bound by residues His-63 and His-92.

It belongs to the globin family. In terms of assembly, heterotetramer of two alpha chains and two beta chains. When oxygenated in vitro, exists virtually only in polymeric form. When deoxygenated, forms tetramers, octamers and larger polymers. Red blood cells.

In terms of biological role, involved in oxygen transport from the lung to the various peripheral tissues. The sequence is that of Hemoglobin subunit beta from Paleosuchus palpebrosus (Cuvier's smooth-fronted caiman).